Here is a 3198-residue protein sequence, read N- to C-terminus: Helicase domino (3198 aa).

Positions 1–12 (MNEGNSAGGGHE) are enriched in gly residues. Disordered stretches follow at residues 1–27 (MNEG…RVTP), 93–112 (LPQQ…APAH), and 119–148 (SSTI…AASI). Over residues 134 to 143 (QRLDDNEDRT) the composition is skewed to basic and acidic residues. A coiled-coil region spans residues 187-212 (KKRILQQKLQILRNLKERHLENVSEY). Disordered stretches follow at residues 256–350 (TSAA…SATS) and 391–474 (GGTP…TPNS). Polar residues-rich tracts occupy residues 264 to 281 (QNQK…SSLV) and 297 to 329 (NISN…TESN). Positions 330 to 350 (SSTTVPGTATSGAATSTSATS) are enriched in low complexity. Over residues 391-404 (GGTPLLPCNTSAGS) the composition is skewed to polar residues. Residues 452-464 (PGTPTSGSLLSPA) are compositionally biased toward low complexity. The region spanning 507–579 (LPKLQEPSRP…QELQLKRVAS (73 aa)) is the HSA domain. The disordered stretch occupies residues 635–848 (NKSVADTPSL…DMEEQDEQED (214 aa)). Residues 638–650 (VADTPSLNSSRLT) are compositionally biased toward polar residues. Positions 652–664 (PKRESDDDFRPES) are enriched in basic and acidic residues. Phosphoserine occurs at positions 656, 664, and 666. The stretch at 666-696 (SEDDEETIAKAEEDAADVKEEVTALAKESEM) forms a coiled coil. 2 stretches are compositionally biased toward basic and acidic residues: residues 672–695 (TIAK…KESE) and 711–721 (ENRDKLMKEEQ). At Thr729 the chain carries Phosphothreonine. Residues Ser733, Ser736, and Ser744 each carry the phosphoserine modification. Positions 741–784 (KEASDDDENTISKQEEAEQEIDHKKEIDELEADNDLSVEQLLAK) form a coiled coil. A compositionally biased stretch (basic and acidic residues) spans 753–767 (KQEEAEQEIDHKKEI). Over residues 805–831 (LDSDDDSTAVDSTEESEDAATEDEEDL) the composition is skewed to acidic residues. Thr838 bears the Phosphothreonine mark. A Helicase ATP-binding domain is found at 926 to 1091 (VTMNERKLNG…WSLMHFLMPY (166 aa)). Residue 939-946 (DEMGLGKT) coordinates ATP. Residues 1471 to 1492 (VQKQSIANGKTEPEEETEAEDP) are disordered. Residues 1662-1812 (TMDRLLRQLK…DMAIEGGNFT (151 aa)) enclose the Helicase C-terminal domain. The tract at residues 1828-1856 (EQSEQDESSQEKSENKDRIVATTTLSDTP) is disordered. Basic and acidic residues predominate over residues 1836 to 1846 (SQEKSENKDRI). A coiled-coil region spans residues 1951–1996 (AAWTAEQLRAAEAELEAQKREWEANRLAAMHKEEELLKQETEAEEM). The tract at residues 2061-2100 (KEHKRSRTDAGYDGSRRPNKMRREDNYVPPRSLFDRPTPQ) is disordered. A compositionally biased stretch (basic and acidic residues) spans 2067-2086 (RTDAGYDGSRRPNKMRREDN). Residues 2136–2205 (TEPEAMAEWC…QCRWRYETHI (70 aa)) enclose the Myb-like domain. A disordered region spans residues 2318-2362 (IREKQRGQQMSQPPVGVGVVQQMQQQSQQQQQPAPPPLPQQQQPQ). Residues 2325-2349 (QQMSQPPVGVGVVQQMQQQSQQQQQ) are compositionally biased toward low complexity.

It belongs to the SNF2/RAD54 helicase family. SWR1 subfamily. As to quaternary structure, component of the Tip60 chromatin-remodeling complex which contains Domino, Tip60, Tra1, Brd8, E(Pc), DMAP1, Pontin, Reptin, Ing3, Act87E, BAP55, Mrg15, MrgBP, Gas41 and YL-1. In terms of tissue distribution, isoform B is present at high levels in ovary, in follicle cells, nurse cells and oocyte. Isoform B is also present in germline and somatic stem cells from the germarium. Isoform A is undetectable in adult ovary (at protein level).

Its subcellular location is the nucleus. Mediates the ATP-dependent exchange of unmodified histone H2AV for its phosphorylated and acetylated form H2AVK5acS138ph, leading to transcriptional regulation of selected genes by chromatin remodeling. Involved in Notch signaling. Represses E2F target genes. Required for somatic stem cell self-renewal but not for germline stem cell self-renewal. Involved in oogenesis. The chain is Helicase domino (dom) from Drosophila melanogaster (Fruit fly).